A 130-amino-acid polypeptide reads, in one-letter code: Small ribosomal subunit protein uS11c (130 aa).

This sequence belongs to the universal ribosomal protein uS11 family. As to quaternary structure, part of the 30S ribosomal subunit.

Its subcellular location is the plastid. The protein localises to the chloroplast. The protein is Small ribosomal subunit protein uS11c of Tupiella akineta (Green alga).